An 84-amino-acid chain; its full sequence is Kidney-associated antigen 1 (84 aa).

Positions 31-84 (PGAAAAHLPRWPPPQLAASRREAPPLSQRPHRTQGAGSPPETNEKLTNPQVKEK) are disordered. Polar residues predominate over residues 75-84 (KLTNPQVKEK).

As to expression, expressed in testis and kidney, and, at lower levels, in urinary bladder and liver. Expressed by a high proportion of tumors of various histologic origin, including melanomas, sarcomas and colorectal carcinomas.

The chain is Kidney-associated antigen 1 (KAAG1) from Homo sapiens (Human).